Here is a 308-residue protein sequence, read N- to C-terminus: Probable manganese-dependent inorganic pyrophosphatase (308 aa).

Mn(2+) is bound by residues His9, Asp13, Asp15, Asp75, His97, and Asp149.

Belongs to the PPase class C family. The cofactor is Mn(2+).

It localises to the cytoplasm. The catalysed reaction is diphosphate + H2O = 2 phosphate + H(+). In Listeria monocytogenes serotype 4a (strain HCC23), this protein is Probable manganese-dependent inorganic pyrophosphatase.